We begin with the raw amino-acid sequence, 1122 residues long: DNA polymerase (1122 aa).

The protein belongs to the DNA polymerase type-B family. As to quaternary structure, heterodimer with the terminal protein; this heterodimer binds to bp 9 to 18 of the genome. Forms a complex with viral pTP, DBP and hosts NFIA and POU2F1/OCT1 for initiation of replication.

The protein resides in the host nucleus. It carries out the reaction DNA(n) + a 2'-deoxyribonucleoside 5'-triphosphate = DNA(n+1) + diphosphate. Its function is as follows. Eukaryotic-type DNA polymerase involved in viral genomic replication. DNA synthesis is protein primed, and acts in a strand displacement replication. Assembles in complex with viral pTP, DBP, host NFIA and host POU2F1/OCT1 on viral origin of replication. The polymerase covalently transfers dCMP onto pTP, thereby initiating complementary strand synthesis. In Human adenovirus B serotype 7 (HAdV-7), this protein is DNA polymerase.